A 209-amino-acid chain; its full sequence is Uracil phosphoribosyltransferase (209 aa).

5-phospho-alpha-D-ribose 1-diphosphate-binding positions include Arg79, Arg104, and 131 to 139 (DPMLATGGS). Residues Val194 and 199-201 (GDA) contribute to the uracil site. Asp200 contacts 5-phospho-alpha-D-ribose 1-diphosphate.

It belongs to the UPRTase family. It depends on Mg(2+) as a cofactor.

The catalysed reaction is UMP + diphosphate = 5-phospho-alpha-D-ribose 1-diphosphate + uracil. It functions in the pathway pyrimidine metabolism; UMP biosynthesis via salvage pathway; UMP from uracil: step 1/1. Allosterically activated by GTP. Functionally, catalyzes the conversion of uracil and 5-phospho-alpha-D-ribose 1-diphosphate (PRPP) to UMP and diphosphate. This Bacillus cereus (strain Q1) protein is Uracil phosphoribosyltransferase.